The sequence spans 392 residues: Adenine nucleotide transporter BT1, chloroplastic/mitochondrial (392 aa).

3 Solcar repeats span residues 108-191, 202-286, and 296-384; these read NPSL…VNKK, IPIP…LRKA, and IGNI…CKKI. 6 helical membrane-spanning segments follow: residues 113–133, 168–188, 204–224, 263–283, 302–322, and 359–379; these read RLLS…PLET, LVNV…FETV, IPAS…LTYP, APSL…YDSL, LLIG…LEVA, and GLGP…MCYE.

It belongs to the mitochondrial carrier (TC 2.A.29) family. As to expression, expressed in root tips, the central cylinder of young roots, and maturating and germinating pollen.

Its subcellular location is the plastid. It is found in the chloroplast inner membrane. The protein resides in the mitochondrion inner membrane. Inhibited by pyridoxal 5-phosphate but not mersalyl. Functionally, probable mitochondrial adenylate carrier that catalyzes the transport of ATP, ADP and AMP, but not ADP-glucose. Recombinant BT1 shows a unidirectional mode of transport in intact E.coli cells. May function as a plastidial nucleotide uniport carrier required to export newly synthesized adenylates into the cytosol. May be involved in abiotic stress response. In Arabidopsis thaliana (Mouse-ear cress), this protein is Adenine nucleotide transporter BT1, chloroplastic/mitochondrial (BT1).